The chain runs to 698 residues: Polyribonucleotide nucleotidyltransferase (698 aa).

Mg(2+)-binding residues include Asp490 and Asp496. The KH domain maps to 557–616 (PKVVTMTIKPDKIRDVIGPGGKKINEIIDETGVKLDIEQDGTIFIGAVDQAMINRAREII). The region spanning 626-694 (GQTYQATVKR…KQGRVNASHR (69 aa)) is the S1 motif domain.

The protein belongs to the polyribonucleotide nucleotidyltransferase family. Mg(2+) is required as a cofactor.

The protein localises to the cytoplasm. It carries out the reaction RNA(n+1) + phosphate = RNA(n) + a ribonucleoside 5'-diphosphate. In terms of biological role, involved in mRNA degradation. Catalyzes the phosphorolysis of single-stranded polyribonucleotides processively in the 3'- to 5'-direction. The sequence is that of Polyribonucleotide nucleotidyltransferase from Staphylococcus aureus (strain bovine RF122 / ET3-1).